The primary structure comprises 824 residues: C-Jun-amino-terminal kinase-interacting protein 2 (824 aa).

4 disordered regions span residues 1–28, 40–160, 172–349, and 361–501; these read MADR…QDIS, ITDD…GFDL, CSPA…DSPW, and EGSS…APRD. Positions 77 to 110 are enriched in acidic residues; the sequence is DFQEFEMIDDNEEEDDEDEEEEEEEEEGDGEGQE. The JNK-binding domain (JBD) stretch occupies residues 110-275; sequence EGGDPGSEAP…RMISSISETE (166 aa). Residues 141 to 156 show a composition bias toward polar residues; that stretch reads LRLTTLGAQDSLNNNG. Residues 239-498 form a necessary for interaction with FGF13 region; that stretch reads GRGGRRSSQE…PGGRGTGPSA (260 aa). Residues serine 254, serine 302, and serine 305 each carry the phosphoserine modification. Residues 268-305 show a composition bias toward low complexity; sequence ISSISETELELSSDGGSSSSGRSSHLTNSIEEASSPAS. Over residues 327–346 the composition is skewed to acidic residues; sequence TNSEYESGSESEPDLSEDAD. Residues 416–432 show a composition bias toward pro residues; it reads APPPPAPAAPRPGPAQP. The segment covering 451-467 has biased composition (low complexity); it reads AAPGRAARPGRACSAAC. The segment covering 468-484 has biased composition (acidic residues); sequence SEEEDEEDDEEEEDAED. The 62-residue stretch at 604-665 folds into the SH3 domain; sequence EREQTHRAVF…PAFYAHAVPG (62 aa). Residues 677 to 813 form the PID domain; sequence PCWVERFDVQ…FLEYYQEHLA (137 aa).

Belongs to the JIP scaffold family. As to quaternary structure, forms homo- or heterooligomeric complexes. Binds specific components of the JNK signaling pathway namely JNK1, JNK2, JNK3, MAP2K7, MAP3K10, MAP3K11, MAP3K12 and MAPK13. Also binds the proline-rich domain-containing splice variant of apolipoprotein E receptor 2 (ApoER2). Binds the cytoplasmic tails of LRP1 and LRP2 (Megalin). Binds the TPR motif-containing C-terminal of kinesin light chain, Klc1, pre-assembled MAPK8IP1 scaffolding complexes are then transported as a cargo of kinesin, to the required subcellular location. Interacts with the cytoplasmic domain of APP. Interacts with DCLK2. Interacts with TIAM1 and TIAM2. Interacts with FGF13; enables the interaction with MAPK13 and may regulate the MAPK8IP2 scaffolding activity. Interacts with SH3RF2. As to expression, expressed mainly in the brain and pancreas, including insulin-secreting cells. In the nervous system, more abundantly expressed in the cerebellum, pituitary gland, occipital lobe and the amygdala. Also expressed in fetal brain. Very low levels found in uterus, ovary, prostate, colon, testis, adrenal gland, thyroid gland and salivary gland.

The protein resides in the cytoplasm. The JNK-interacting protein (JIP) group of scaffold proteins selectively mediates JNK signaling by aggregating specific components of the MAPK cascade to form a functional JNK signaling module. JIP2 inhibits IL1 beta-induced apoptosis in insulin-secreting cells. May function as a regulator of vesicle transport, through interactions with the JNK-signaling components and motor proteins. In Homo sapiens (Human), this protein is C-Jun-amino-terminal kinase-interacting protein 2 (MAPK8IP2).